The primary structure comprises 685 residues: MGSSATATTTGESTRQQPGLACEECRRRKARCDRVRPKCGICADSGRNCVVLDKRSQRGPKKGQLKDLRSRLMLLEQRLVGQNDAPSLPQERDSLGCPTPSEKVSPEGDLVSSRASTDIGLDTCMGSTAGAFALFGSTSGSDKMPPLTPDLSTASTANSMAACICKGWQTEPAMFSTSPFPQIPLTPQSTTAPSRMPSISLAAADPIMPDVRVHPFAPMVHKRRYYAWASDPNASPARTALRSAMRTIASAMSPQFCDIGHVMYASTRRMLETQDACPETGLPWMTRLKPPHEQRKMHHERIQAWLLLAYYDVLRKSEHQAFITARRAFRLLRLSGLCEMDIDAYSGRQGDVATCTPPAETTWNMQMCSSENGADEAVLQQDWISVEERRRTVWSAFLLDRLSTMVNDQPTMLMEEAVTKPHACTFSWYFSADLPISNQFYTRLPMSEAEFQSGTQEPVSQMGFLIEATDGIKASNSIQPLPPFAHCVVVANLFARCMTHCKMAMQSPPMSAPEAHDFWIRHQWLASAAANACESTETRCDPMLVFTRILAYSASLSLCSTANATSWQTLDHHLMAMACKPAAHQAASEVVRIIKTAPRIAFFKMHPFFPNAIALVTSFLNADVPYLPSTRGGNAMDAIQERQDAVNELLAALRRSSQVNNLAAELLCKLELDIGQAASDGSIYG.

Residues 1–14 (MGSSATATTTGEST) show a composition bias toward low complexity. Residues 1–20 (MGSSATATTTGESTRQQPGL) form a disordered region. The zn(2)-C6 fungal-type DNA-binding region spans 22-49 (CEECRRRKARCDRVRPKCGICADSGRNC). Positions 81 to 112 (GQNDAPSLPQERDSLGCPTPSEKVSPEGDLVS) are disordered.

The protein resides in the nucleus. In terms of biological role, transcription factor that acts as the main regulator of the gene cluster that mediates the biosynthesis of sorbicillinoids, a diverse group of yellow secondary metabolites that restrict growth of competing pathogenic fungi but not of bacteria. The chain is Sorbicillinoid biosynthetic cluster transcription factor sor4 from Hypocrea jecorina (strain QM6a) (Trichoderma reesei).